We begin with the raw amino-acid sequence, 83 residues long: Small ribosomal subunit protein bS18 (83 aa).

The protein belongs to the bacterial ribosomal protein bS18 family. As to quaternary structure, part of the 30S ribosomal subunit. Forms a tight heterodimer with protein bS6.

Binds as a heterodimer with protein bS6 to the central domain of the 16S rRNA, where it helps stabilize the platform of the 30S subunit. The protein is Small ribosomal subunit protein bS18 of Cytophaga hutchinsonii (strain ATCC 33406 / DSM 1761 / CIP 103989 / NBRC 15051 / NCIMB 9469 / D465).